A 171-amino-acid polypeptide reads, in one-letter code: UPF0312 protein SAB2563 (171 aa).

Belongs to the UPF0312 family.

This Staphylococcus aureus (strain bovine RF122 / ET3-1) protein is UPF0312 protein SAB2563.